We begin with the raw amino-acid sequence, 443 residues long: Xaa-Pro dipeptidase (443 aa).

Residues Asp246, Asp257, His339, Glu384, and Glu423 each coordinate Mn(2+).

This sequence belongs to the peptidase M24B family. Bacterial-type prolidase subfamily. Mn(2+) is required as a cofactor.

The enzyme catalyses Xaa-L-Pro dipeptide + H2O = an L-alpha-amino acid + L-proline. Its function is as follows. Splits dipeptides with a prolyl residue in the C-terminal position. This chain is Xaa-Pro dipeptidase, found in Escherichia coli O8 (strain IAI1).